We begin with the raw amino-acid sequence, 160 residues long: Cytochrome b6-f complex subunit 4 (160 aa).

Transmembrane regions (helical) follow at residues 36-56 (LLYI…GLAV), 95-115 (LLGV…PFLE), and 131-151 (TVFL…TLPI).

It belongs to the cytochrome b family. PetD subfamily. As to quaternary structure, the 4 large subunits of the cytochrome b6-f complex are cytochrome b6, subunit IV (17 kDa polypeptide, petD), cytochrome f and the Rieske protein, while the 4 small subunits are petG, petL, petM and petN. The complex functions as a dimer.

Its subcellular location is the plastid. It is found in the chloroplast thylakoid membrane. Component of the cytochrome b6-f complex, which mediates electron transfer between photosystem II (PSII) and photosystem I (PSI), cyclic electron flow around PSI, and state transitions. The protein is Cytochrome b6-f complex subunit 4 of Daucus carota (Wild carrot).